The following is a 133-amino-acid chain: DNA-directed RNA polymerase subunit omega (133 aa).

It belongs to the RNA polymerase subunit omega family. In terms of assembly, the RNAP catalytic core consists of 2 alpha, 1 beta, 1 beta' and 1 omega subunit. When a sigma factor is associated with the core the holoenzyme is formed, which can initiate transcription.

It carries out the reaction RNA(n) + a ribonucleoside 5'-triphosphate = RNA(n+1) + diphosphate. Promotes RNA polymerase assembly. Latches the N- and C-terminal regions of the beta' subunit thereby facilitating its interaction with the beta and alpha subunits. This is DNA-directed RNA polymerase subunit omega from Brucella abortus (strain S19).